The following is a 34-amino-acid chain: Tryptophanase operon leader peptide (34 aa).

This is Tryptophanase operon leader peptide (tnaL) from Proteus vulgaris.